Reading from the N-terminus, the 58-residue chain is Large ribosomal subunit protein uL30 (58 aa).

The protein belongs to the universal ribosomal protein uL30 family. In terms of assembly, part of the 50S ribosomal subunit.

The polypeptide is Large ribosomal subunit protein uL30 (Erythrobacter litoralis (strain HTCC2594)).